A 415-amino-acid polypeptide reads, in one-letter code: Probable G-protein coupled receptor 19 (415 aa).

Over 1–69 (MGFDHRMETD…LNPGEVATAS (69 aa)) the chain is Extracellular. 2 N-linked (GlcNAc...) asparagine glycosylation sites follow: asparagine 25 and asparagine 52. The helical transmembrane segment at 70–90 (IFFGALWLFSIFGNSLVCLVI) threads the bilayer. Over 91-102 (HRSRRTQSTTNY) the chain is Cytoplasmic. A helical transmembrane segment spans residues 103–123 (FVVSMACADLLISVASTPFVV). Over 124–152 (LQFTTGRWTLGSAMCKVVRYFQYLTPGVQ) the chain is Extracellular. A disulfide bridge connects residues cysteine 138 and cysteine 210. The chain crosses the membrane as a helical span at residues 153-173 (IYVLLSICIDRFYTIVYPLSF). Residues 174 to 182 (KVSREKAKR) are Cytoplasmic-facing. Residues 183 to 203 (MIAASWILDAAFVTPVFFFYG) form a helical membrane-spanning segment. Residues 204–221 (SNWDSHCNYFLPPSWEGT) lie on the Extracellular side of the membrane. The chain crosses the membrane as a helical span at residues 222–242 (AYTVIHFLVGFVIPSVLIILF). Residues 243-277 (YQKVIKYIWRIGTDGRTLRRTMNIVPRTKVKTVKM) are Cytoplasmic-facing. A helical transmembrane segment spans residues 278–298 (FLLLNLVFLFSWLPFHVAQLW). Topologically, residues 299 to 309 (HPHEQDYRKSS) are extracellular. A helical transmembrane segment spans residues 310–332 (LVFTAVTWVSFSSSASKPTLYSI). At 333–415 (YNANFRRGMK…INSNPPNTFV (83 aa)) the chain is on the cytoplasmic side.

Belongs to the G-protein coupled receptor 1 family. In terms of tissue distribution, abundant expression in the brain.

Its subcellular location is the cell membrane. G-protein coupled receptor that plays a role in the regulation of circadian rhythms and energy metabolism. Participates in maintaining proper circadian gene expression in the suprachiasmatic nucleus (SCN), the locus of the master circadian clock in the brain. May function as a coordinator of aging-associated metabolic dysfunction, stress response, DNA integrity management, and eventual senescence. Upon binding to adropin, modulates mitochondrial energy metabolism via the p44/42-PDK4 signaling pathway, influencing pyruvate dehydrogenase activity. In Rattus norvegicus (Rat), this protein is Probable G-protein coupled receptor 19 (Gpr19).